Here is a 318-residue protein sequence, read N- to C-terminus: Biotin synthase (318 aa).

Residues 44 to 273 (LCGKKFNLCT…EKQIRLAGGR (230 aa)) enclose the Radical SAM core domain. Residues Cys62, Cys66, and Cys69 each contribute to the [4Fe-4S] cluster site. [2Fe-2S] cluster is bound by residues Ser106, Cys138, Cys198, and Arg268.

Belongs to the radical SAM superfamily. Biotin synthase family. In terms of assembly, homodimer. [4Fe-4S] cluster serves as cofactor. It depends on [2Fe-2S] cluster as a cofactor.

The enzyme catalyses (4R,5S)-dethiobiotin + (sulfur carrier)-SH + 2 reduced [2Fe-2S]-[ferredoxin] + 2 S-adenosyl-L-methionine = (sulfur carrier)-H + biotin + 2 5'-deoxyadenosine + 2 L-methionine + 2 oxidized [2Fe-2S]-[ferredoxin]. It participates in cofactor biosynthesis; biotin biosynthesis; biotin from 7,8-diaminononanoate: step 2/2. Catalyzes the conversion of dethiobiotin (DTB) to biotin by the insertion of a sulfur atom into dethiobiotin via a radical-based mechanism. The sequence is that of Biotin synthase from Clostridium botulinum (strain Alaska E43 / Type E3).